The primary structure comprises 75 residues: Putative defensin-like protein 55 (75 aa).

A signal peptide spans 1-19 (MNITKAYVIFFLVVILTNS). Cystine bridges form between C39–C73, C43–C66, C52–C71, and C56–C72.

Belongs to the DEFL family.

It is found in the secreted. In Arabidopsis thaliana (Mouse-ear cress), this protein is Putative defensin-like protein 55.